Reading from the N-terminus, the 157-residue chain is 3-dehydroquinate dehydratase (157 aa).

The active-site Proton acceptor is Y24. Residues N75, H81, and D88 each contribute to the substrate site. The Proton donor role is filled by H101. Substrate is bound by residues 102 to 103 (LS) and R112.

Belongs to the type-II 3-dehydroquinase family. Homododecamer.

The enzyme catalyses 3-dehydroquinate = 3-dehydroshikimate + H2O. Its pathway is metabolic intermediate biosynthesis; chorismate biosynthesis; chorismate from D-erythrose 4-phosphate and phosphoenolpyruvate: step 3/7. In terms of biological role, catalyzes a trans-dehydration via an enolate intermediate. The protein is 3-dehydroquinate dehydratase of Brucella abortus (strain S19).